The chain runs to 344 residues: Cyanuric acid amidohydrolase (344 aa).

Positions 1–91 (MTVVDIVKRT…ASAFVGTDRP (91 aa)) are RU A. Residues Arg51 and 71–72 (SG) contribute to the substrate site. The RU B stretch occupies residues 97 to 232 (ALVAAVGRTA…CHILVLGNSP (136 aa)). Lys146 is a catalytic residue. Substrate-binding positions include Arg178 and 215-216 (SS). Ser215 (nucleophile) is an active-site residue. The RU C stretch occupies residues 238-344 (LRAVHGVMRD…PVTVVYRVAS (107 aa)). Mg(2+) is bound at residue Glu276. Substrate is bound by residues Arg303 and 322 to 323 (SG). 5 residues coordinate Mg(2+): Ala325, Gln328, Gly329, Pro330, and Gly333.

It belongs to the cyclic amide hydrolase (CyAH) family. As to quaternary structure, homotetramer.

It carries out the reaction cyanurate + H2O = 1-carboxybiuret + H(+). The protein operates within xenobiotic degradation; atrazine degradation; biuret from cyanurate: step 1/1. With respect to regulation, inhibited by barbituric acid. In terms of biological role, responsible for the hydrolysis of cyanuric acid, an intermediate formed during catabolism of s-triazine based compounds in herbicides such as atrazine and polymers such as melamine. Catalyzes the hydrolytic opening of the s-triazine ring of cyanuric acid (2,4,6-trihydroxy-s-triazine) to yield carbon dioxide and carboxybiuret, which spontaneously decarboxylates to biuret. This is Cyanuric acid amidohydrolase from Pseudonocardia dioxanivorans (strain ATCC 55486 / DSM 44775 / JCM 13855 / CB1190).